A 569-amino-acid polypeptide reads, in one-letter code: Arginine--tRNA ligase (569 aa).

Residues 123 to 133 carry the 'HIGH' region motif; that stretch reads ANPNGPLHVGH.

It belongs to the class-I aminoacyl-tRNA synthetase family.

It is found in the cytoplasm. It catalyses the reaction tRNA(Arg) + L-arginine + ATP = L-arginyl-tRNA(Arg) + AMP + diphosphate. The chain is Arginine--tRNA ligase from Methanosarcina barkeri (strain Fusaro / DSM 804).